Here is a 212-residue protein sequence, read N- to C-terminus: Protein-L-isoaspartate O-methyltransferase (212 aa).

The active site involves S62.

Belongs to the methyltransferase superfamily. L-isoaspartyl/D-aspartyl protein methyltransferase family.

It is found in the cytoplasm. It catalyses the reaction [protein]-L-isoaspartate + S-adenosyl-L-methionine = [protein]-L-isoaspartate alpha-methyl ester + S-adenosyl-L-homocysteine. Functionally, catalyzes the methyl esterification of L-isoaspartyl residues in peptides and proteins that result from spontaneous decomposition of normal L-aspartyl and L-asparaginyl residues. It plays a role in the repair and/or degradation of damaged proteins. In Pseudoalteromonas translucida (strain TAC 125), this protein is Protein-L-isoaspartate O-methyltransferase.